The chain runs to 268 residues: Orotidine 5'-phosphate decarboxylase (268 aa).

Residues D38, K60–H62, D92–T101, Y218, and R236 contribute to the substrate site. Residue K94 is the Proton donor of the active site.

It belongs to the OMP decarboxylase family.

The enzyme catalyses orotidine 5'-phosphate + H(+) = UMP + CO2. Its pathway is pyrimidine metabolism; UMP biosynthesis via de novo pathway; UMP from orotate: step 2/2. This is Orotidine 5'-phosphate decarboxylase (URA3) from Candida tropicalis (Yeast).